Reading from the N-terminus, the 141-residue chain is Putative pre-16S rRNA nuclease (141 aa).

Belongs to the YqgF nuclease family.

It localises to the cytoplasm. Functionally, could be a nuclease involved in processing of the 5'-end of pre-16S rRNA. In Histophilus somni (strain 129Pt) (Haemophilus somnus), this protein is Putative pre-16S rRNA nuclease.